The sequence spans 147 residues: uncharacterized protein (147 aa).

This is an uncharacterized protein from Acidianus convivator (ATV).